A 345-amino-acid polypeptide reads, in one-letter code: Variable large protein 23 (345 aa).

The signal sequence occupies residues M1–S18. C19 carries the N-palmitoyl cysteine lipid modification. C19 carries S-diacylglycerol cysteine lipidation.

It belongs to the variable large protein (Vlp) family. Delta subfamily.

It is found in the cell outer membrane. Functionally, the Vlp and Vsp proteins are antigenically distinct proteins, only one vlp or vsp gene is transcriptionally active at any one time. Switching between these genes is a mechanism of host immune response evasion. This is Variable large protein 23 from Borrelia hermsii.